Reading from the N-terminus, the 575-residue chain is Transcription factor coe2 (575 aa).

Residues 63 to 66 form an interaction with DNA region; it reads RKSN. The C5-type zinc-finger motif lies at 151–170; the sequence is CRVLLTHEVMCSRCCEKKSC. Interaction with DNA stretches follow at residues 197-204 and 236-239; these read NCLKTAGN and NNSK. The 83-residue stretch at 254–336 folds into the IPT/TIG domain; it reads PCIKAISPSE…CKGAPGRFIY (83 aa). Residues 450 to 487 are disordered; it reads IRNTSSISPRGYSSSSTPQQSNYSTPSNSMNGYSNVPM. A compositionally biased stretch (low complexity) spans 454 to 476; the sequence is SSISPRGYSSSSTPQQSNYSTPS. Polar residues predominate over residues 477–487; sequence NSMNGYSNVPM.

It belongs to the COE family.

The protein resides in the nucleus. May play a pivotal role in the transcriptional cascade that specifies primary neurons in embryos. Stabilizes the higher neural potential of selected progenitor cells that express neurog2/X-ngnr-1 by maintaining Delta-Notch signaling. Thus ensures the transition between neural competence and irreversible commitment to a neural fate. Also promotes neuronal differentiation by activating neurod1 expression, directly or indirectly. The polypeptide is Transcription factor coe2 (Xenopus tropicalis (Western clawed frog)).